We begin with the raw amino-acid sequence, 187 residues long: Threonylcarbamoyl-AMP synthase (187 aa).

Residues 4–187 (TLTLSEAVTA…DARSGHILRL (184 aa)) enclose the YrdC-like domain.

Belongs to the SUA5 family. TsaC subfamily.

It localises to the cytoplasm. The catalysed reaction is L-threonine + hydrogencarbonate + ATP = L-threonylcarbamoyladenylate + diphosphate + H2O. In terms of biological role, required for the formation of a threonylcarbamoyl group on adenosine at position 37 (t(6)A37) in tRNAs that read codons beginning with adenine. Catalyzes the conversion of L-threonine, HCO(3)(-)/CO(2) and ATP to give threonylcarbamoyl-AMP (TC-AMP) as the acyladenylate intermediate, with the release of diphosphate. The sequence is that of Threonylcarbamoyl-AMP synthase from Xylella fastidiosa (strain M23).